The primary structure comprises 211 residues: Large ribosomal subunit protein uL3 (211 aa).

Positions 122 to 147 (AIKRHGQSRGPMAHGSRYHRRPGSMG) are disordered.

This sequence belongs to the universal ribosomal protein uL3 family. In terms of assembly, part of the 50S ribosomal subunit. Forms a cluster with proteins L14 and L19.

In terms of biological role, one of the primary rRNA binding proteins, it binds directly near the 3'-end of the 23S rRNA, where it nucleates assembly of the 50S subunit. The protein is Large ribosomal subunit protein uL3 of Geobacillus sp. (strain WCH70).